The sequence spans 448 residues: Tubulin beta chain (448 aa).

Q11, E69, S138, G142, T143, G144, N204, and N226 together coordinate GTP. E69 is a binding site for Mg(2+). A disordered region spans residues 425–448 (YQDASISEGEEEYLEEEEPLEHEE). Residues 432–448 (EGEEEYLEEEEPLEHEE) show a composition bias toward acidic residues.

This sequence belongs to the tubulin family. Dimer of alpha and beta chains. A typical microtubule is a hollow water-filled tube with an outer diameter of 25 nm and an inner diameter of 15 nM. Alpha-beta heterodimers associate head-to-tail to form protofilaments running lengthwise along the microtubule wall with the beta-tubulin subunit facing the microtubule plus end conferring a structural polarity. Microtubules usually have 13 protofilaments but different protofilament numbers can be found in some organisms and specialized cells. Mg(2+) is required as a cofactor.

It localises to the cytoplasm. It is found in the cytoskeleton. Functionally, tubulin is the major constituent of microtubules, a cylinder consisting of laterally associated linear protofilaments composed of alpha- and beta-tubulin heterodimers. Microtubules grow by the addition of GTP-tubulin dimers to the microtubule end, where a stabilizing cap forms. Below the cap, tubulin dimers are in GDP-bound state, owing to GTPase activity of alpha-tubulin. The polypeptide is Tubulin beta chain (benA56) (Aspergillus oryzae (strain ATCC 42149 / RIB 40) (Yellow koji mold)).